Here is a 121-residue protein sequence, read N- to C-terminus: Large ribosomal subunit protein uL18c (121 aa).

Belongs to the universal ribosomal protein uL18 family. Part of the 50S ribosomal subunit; contacts the 5S rRNA.

The protein resides in the plastid. It is found in the cyanelle. Functionally, binds 5S rRNA, forms part of the central protuberance of the 50S subunit. The protein is Large ribosomal subunit protein uL18c (rpl18) of Cyanophora paradoxa.